Reading from the N-terminus, the 56-residue chain is MAVQQNKKSRSKRGMRRSHDALSTAQLSVDATSGELHRRHNVTADGFYRGQKVINK.

Residues 1–37 (MAVQQNKKSRSKRGMRRSHDALSTAQLSVDATSGELH) form a disordered region. Basic residues predominate over residues 7–16 (KKSRSKRGMR). Over residues 21 to 31 (ALSTAQLSVDA) the composition is skewed to polar residues.

The protein belongs to the bacterial ribosomal protein bL32 family.

This is Large ribosomal subunit protein bL32 from Shewanella pealeana (strain ATCC 700345 / ANG-SQ1).